We begin with the raw amino-acid sequence, 157 residues long: Ribosomal RNA large subunit methyltransferase H (157 aa).

S-adenosyl-L-methionine is bound by residues G104 and 123–128 (LSSLTL).

This sequence belongs to the RNA methyltransferase RlmH family. In terms of assembly, homodimer.

It localises to the cytoplasm. It carries out the reaction pseudouridine(1915) in 23S rRNA + S-adenosyl-L-methionine = N(3)-methylpseudouridine(1915) in 23S rRNA + S-adenosyl-L-homocysteine + H(+). In terms of biological role, specifically methylates the pseudouridine at position 1915 (m3Psi1915) in 23S rRNA. This chain is Ribosomal RNA large subunit methyltransferase H, found in Nitrosococcus oceani (strain ATCC 19707 / BCRC 17464 / JCM 30415 / NCIMB 11848 / C-107).